We begin with the raw amino-acid sequence, 461 residues long: MPNRLIPLANPANRVLQLDAKLLDNEISDMLYRQLSGAFNSNRLPSWLGRIHSNYASELKLLLELLIFKVTVWNKHSSYGLTLQNLVMYDGGVHNKKFRSKQQSELRVTKKILLLSSVLLGYFVKKIQSYVYSFEDYDLETDGEDLSTLERIRLKTIKLLKSQISTLEKAHSVLSLVNFVTFLVSGSFPDLTTRILNIRFKPLVTTQVAFASNPETISYEFQNRQLVWNTLTEFIVFILPALSVPKFTKSLVSSITGTSPKSSQVTDEDLKVFSSLPERVCAICFQNSQNSDSGAQNDISLNDTLVTNPYETTCGHIYCYVCILSKLQIFKEEGKNLPKSDPNKYWHCLRCNEPASWCRVYTGDVEDALRQKAVEEVTEDEDASSEDEEKRDQDSEGAKTVSQSFHHVNGSDYQTASFIEQAELNENEYTDGSEVEIYDAEDEYTDEEVDDDSPGFFVGAL.

Topologically, residues 1 to 13 (MPNRLIPLANPAN) are peroxisomal matrix. A helical transmembrane segment spans residues 14–40 (RVLQLDAKLLDNEISDMLYRQLSGAFN). The Cytoplasmic segment spans residues 41 to 51 (SNRLPSWLGRI). Residues 52 to 77 (HSNYASELKLLLELLIFKVTVWNKHS) traverse the membrane as a helical segment. The Peroxisomal matrix portion of the chain corresponds to 78–101 (SYGLTLQNLVMYDGGVHNKKFRSK). Residues 102 to 139 (QQSELRVTKKILLLSSVLLGYFVKKIQSYVYSFEDYDL) traverse the membrane as a helical segment. Topologically, residues 140 to 151 (ETDGEDLSTLER) are cytoplasmic. The chain crosses the membrane as a helical span at residues 152-185 (IRLKTIKLLKSQISTLEKAHSVLSLVNFVTFLVS). Residues 186-218 (GSFPDLTTRILNIRFKPLVTTQVAFASNPETIS) lie on the Peroxisomal matrix side of the membrane. Residues 219–242 (YEFQNRQLVWNTLTEFIVFILPAL) form a helical membrane-spanning segment. The Cytoplasmic portion of the chain corresponds to 243 to 461 (SVPKFTKSLV…DSPGFFVGAL (219 aa)). Zn(2+) is bound by residues C281, C284, C314, H316, C319, C322, C348, and C351. An RING-type zinc finger spans residues 281-352 (CAICFQNSQN…NKYWHCLRCN (72 aa)). Disordered stretches follow at residues 374 to 408 (VEEV…FHHV) and 440 to 461 (AEDE…VGAL). A compositionally biased stretch (acidic residues) spans 376–387 (EVTEDEDASSED). The span at 388-397 (EEKRDQDSEG) shows a compositional bias: basic and acidic residues. The segment covering 440 to 453 (AEDEYTDEEVDDDS) has biased composition (acidic residues).

This sequence belongs to the pex2/pex10/pex12 family. In terms of assembly, component of the peroxisomal translocation complex, composed of at least PEX3, PEX2, PEX10 and PEX12.

The protein localises to the peroxisome membrane. It catalyses the reaction [E2 ubiquitin-conjugating enzyme]-S-ubiquitinyl-L-cysteine + [acceptor protein]-L-cysteine = [E2 ubiquitin-conjugating enzyme]-L-cysteine + [acceptor protein]-S-ubiquitinyl-L-cysteine.. It participates in protein modification; protein ubiquitination. Its function is as follows. E3 ubiquitin-protein ligase component of the peroxisomal translocation complex. The two types of peroxisomal matrix targeting signals, PTS1 and PTS2, are first recognized in the cytosol by their receptors PEX5 and PEX7, respectively, which then carry the cargo to the peroxisomal membrane. The peroxisomal targeting signal (PTS) receptor-cargo complexes interact with peroxisomal membrane protein (PMP) components of the docking complex. They have then additional downstream interactions with the translocation complex, leading to the transport of fully folded and oligomerized cargo into the peroxisome matrix. The peroxisomal translocation complex forms the retrotranslocation channel with each subunit contributing transmembrane segments that coassemble into an open channel that specifically allows the passage of PEX5 and PEX20 through the peroxisomal membrane. Specifically catalyzes monoubiquitination of PEX5 and/or PEX20 at 'Cys-6' and 'Cys-8', respectively, a modification that acts as a signal for PEX5 or PEX20 export from peroxisomes to the cytosol, thereby promoting PEX5 and PEX20 recycling. This is Peroxisomal biogenesis factor 2 (PEX2) from Komagataella phaffii (strain GS115 / ATCC 20864) (Yeast).